The sequence spans 345 residues: Dihydroorotase (345 aa).

Residues histidine 13 and histidine 15 each coordinate Zn(2+). Residues 15–17 (HFR) and asparagine 41 contribute to the substrate site. Zn(2+)-binding residues include lysine 98, histidine 135, and histidine 173. The residue at position 98 (lysine 98) is an N6-carboxylysine. Histidine 135 contacts substrate. Leucine 218 is a binding site for substrate. Position 246 (aspartate 246) interacts with Zn(2+). Aspartate 246 is an active-site residue. Histidine 250 and alanine 262 together coordinate substrate.

Belongs to the metallo-dependent hydrolases superfamily. DHOase family. Class II DHOase subfamily. As to quaternary structure, homodimer. Zn(2+) is required as a cofactor.

It catalyses the reaction (S)-dihydroorotate + H2O = N-carbamoyl-L-aspartate + H(+). Its pathway is pyrimidine metabolism; UMP biosynthesis via de novo pathway; (S)-dihydroorotate from bicarbonate: step 3/3. Functionally, catalyzes the reversible cyclization of carbamoyl aspartate to dihydroorotate. The polypeptide is Dihydroorotase (Shewanella frigidimarina (strain NCIMB 400)).